The sequence spans 650 residues: FAS-associated factor 1 (650 aa).

One can recognise a UBA domain in the interval 1–57 (MASNMDREMILADFQACTGIENIDEAITLLEQNNWDLVAAINGVIPQENGILQSEYG). The interval 62-87 (PGPAFNPASHPASAPTSSSSSAFRPV) is disordered. Residues 68–83 (PASHPASAPTSSSSSA) are compositionally biased toward low complexity. Residue serine 320 is modified to Phosphoserine. The UBX domain maps to 569 to 646 (NAEPVSKLRI…KLFPQETLFL (78 aa)). Threonine 580 carries the post-translational modification Phosphothreonine. Phosphoserine is present on serine 582.

In terms of assembly, interacts with CDT1 and ATPase VCP/p97. Interacts (via UBA domain) with FAS (via death domain). Interacts (via UBA domain) with NLRP12 (via DAPIN/PYRIN domain). As to expression, most abundant in testis, slightly less abundant in skeletal muscle and heart, followed by prostate, thymus, ovary, small intestine, and colon. Not detected in the peripheral blood leukocytes.

It localises to the nucleus. Functionally, ubiquitin-binding protein. Required for the progression of DNA replication forks by targeting DNA replication licensing factor CDT1 for degradation. Potentiates but cannot initiate FAS-induced apoptosis. This chain is FAS-associated factor 1 (FAF1), found in Homo sapiens (Human).